A 336-amino-acid polypeptide reads, in one-letter code: Dihydroorotate dehydrogenase (quinone) (336 aa).

Residues 62-66 (AGLDK) and Thr86 contribute to the FMN site. Substrate is bound at residue Lys66. 111–115 (NRMGF) is a substrate binding site. The FMN site is built by Asn139 and Asn172. Asn172 serves as a coordination point for substrate. The Nucleophile role is filled by Ser175. Substrate is bound at residue Asn177. Residues Lys217 and Thr245 each contribute to the FMN site. 246-247 (NT) provides a ligand contact to substrate. FMN-binding positions include Gly268, Gly297, and 318-319 (YS).

It belongs to the dihydroorotate dehydrogenase family. Type 2 subfamily. In terms of assembly, monomer. The cofactor is FMN.

The protein localises to the cell membrane. The catalysed reaction is (S)-dihydroorotate + a quinone = orotate + a quinol. The protein operates within pyrimidine metabolism; UMP biosynthesis via de novo pathway; orotate from (S)-dihydroorotate (quinone route): step 1/1. Functionally, catalyzes the conversion of dihydroorotate to orotate with quinone as electron acceptor. This Enterobacter sp. (strain 638) protein is Dihydroorotate dehydrogenase (quinone).